A 442-amino-acid polypeptide reads, in one-letter code: Cyclin-A1-2 (442 aa).

Polar residues-rich tracts occupy residues 1 to 12 (MSSSSRNLSQEN) and 39 to 63 (ITNQKNGSRNPSPSSTLVNCSNKIG). The tract at residues 1 to 72 (MSSSSRNLSQ…GQSKKAPKPA (72 aa)) is disordered.

The protein belongs to the cyclin family. Cyclin AB subfamily. In terms of assembly, interacts with CDC20-1, CDC20-2, FZR2/CCS52A1 and FZR1/CCS52A2. Expressed in roots, stems and flowers.

It is found in the cytoplasm. The protein resides in the nucleus. Involved in the regulation of male meiosis progression. In Arabidopsis thaliana (Mouse-ear cress), this protein is Cyclin-A1-2 (CYCA1-2).